The chain runs to 395 residues: MANDYLFTSESVSEGHPDKVADQISDAILDAILEQDKYSRVAAETLCNTGLVVLAGEITTTANIDYIQIARDTIKRIGYDNTDYGIDYKGCAVLVAYDKQSPDIAQGVDRAHDDNLDQGAGDQGLMFGYACDETPELMPLPIYLSHRLVERQASLRRDGRLQWLRPDAKSQVTVRYVDGKPDSIDTVVLSTQHAPDIELPALREAVIEEIIKPTLPADLIKGDIKFLVNPTGRFVIGGPQGDCGLTGRKIIVDTYGGAAPHGGGAFSGKDPSKVDRSAAYAGRYVAKNIVAAGLASRALIQVSYAIGVAEPTSVMVNTFGTGRVSDAVITKLVREHFDLRPKGIIKMLDLLRPIYEKTAAYGHFGREEPEFSWEATDKALALAEAAGVEPTARVA.

His-16 provides a ligand contact to ATP. A Mg(2+)-binding site is contributed by Asp-18. Glu-44 is a binding site for K(+). Residues Glu-57 and Gln-100 each contribute to the L-methionine site. The tract at residues 100 to 110 (QSPDIAQGVDR) is flexible loop. ATP-binding positions include 167–169 (DAK), 233–234 (RF), Asp-242, 248–249 (RK), Ala-265, and Lys-269. An L-methionine-binding site is contributed by Asp-242. An L-methionine-binding site is contributed by Lys-273.

It belongs to the AdoMet synthase family. As to quaternary structure, homotetramer; dimer of dimers. Requires Mg(2+) as cofactor. K(+) is required as a cofactor.

The protein localises to the cytoplasm. The enzyme catalyses L-methionine + ATP + H2O = S-adenosyl-L-methionine + phosphate + diphosphate. It participates in amino-acid biosynthesis; S-adenosyl-L-methionine biosynthesis; S-adenosyl-L-methionine from L-methionine: step 1/1. In terms of biological role, catalyzes the formation of S-adenosylmethionine (AdoMet) from methionine and ATP. The overall synthetic reaction is composed of two sequential steps, AdoMet formation and the subsequent tripolyphosphate hydrolysis which occurs prior to release of AdoMet from the enzyme. In Burkholderia cenocepacia (strain ATCC BAA-245 / DSM 16553 / LMG 16656 / NCTC 13227 / J2315 / CF5610) (Burkholderia cepacia (strain J2315)), this protein is S-adenosylmethionine synthase.